Reading from the N-terminus, the 306-residue chain is MRLKELGEFGLIDLIKKTLESKVIGDDTAPVEYCSKKLLLTTDVLNEGVHFLRSYIPEAVGWKAISVNVSDVIANGGLPKWALISLNLPEDLEVSYVERFYIGVKRACEFYKCEVVGGNISKSEKIGISVFLVGETERFVGRDGARLGDSVFVSGTLGDSRAGLELLLMEKEEYEPFELALIQRHLRPTARIDYVKHIQKYANASMDISDGLVADANHLAQRSGVKIEILSEKLPLSNELKMYCEKYGKNPIEYALFGGEDYQLLFTHPKERWNPFLDMTEIGRVEEGEGVFVDGKKVEPKGWKHF.

Asp27, Thr41, Thr42, and Asp43 together coordinate Mg(2+). Substrate is bound at residue His50. Residue Asp71 coordinates Mg(2+). Residues Tyr101, 118–119, and Arg142 each bind ATP; that span reads GN. Asn119 lines the Mg(2+) pocket. Mg(2+) is bound at residue Asp207. Residue Ser209 participates in ATP binding. Asp210 contributes to the Mg(2+) binding site. Glu260 and Trp303 together coordinate substrate.

Belongs to the thiamine-monophosphate kinase family. In terms of assembly, homodimer.

It catalyses the reaction thiamine phosphate + ATP = thiamine diphosphate + ADP. Its pathway is cofactor biosynthesis; thiamine diphosphate biosynthesis; thiamine diphosphate from thiamine phosphate: step 1/1. Catalyzes the ATP-dependent phosphorylation of thiamine-monophosphate (TMP) to form thiamine-pyrophosphate (TPP), the active form of vitamin B1. The chain is Thiamine-monophosphate kinase (thiL) from Aquifex aeolicus (strain VF5).